The sequence spans 335 residues: Transcriptional coactivator YAP1-B (335 aa).

Residues 1-13 (MEPGSQQQPSAPG) are compositionally biased toward low complexity. A disordered region spans residues 1-21 (MEPGSQQQPSAPGQQPPPVGH). The residue at position 30 (Ser30) is a Phosphoserine; by LATS1 and LATS2. Residues 114–124 (MNQQRLSQSAP) show a composition bias toward polar residues. Residues 114 to 146 (MNQQRLSQSAPVKSPPALQPQSPPSGVLGSGGN) are disordered. A compositionally biased stretch (pro residues) spans 126–136 (KSPPALQPQSP). The transactivation domain stretch occupies residues 137-335 (PSGVLGSGGN…LDKESFLTWL (199 aa)). The stretch at 145–173 (GNQQMRLQQLQMEKERLRLKHQELLRQVR) forms a coiled coil.

Belongs to the YAP1 family. In terms of processing, phosphorylated by lats1 and lats2; leading to cytoplasmic translocation and inactivation.

It is found in the cytoplasm. It localises to the nucleus. The protein resides in the cell junction. The protein localises to the tight junction. Its subcellular location is the cell membrane. Functionally, transcriptional regulator which can act both as a coactivator and a corepressor and is the critical downstream regulatory target in the Hippo signaling pathway that plays a pivotal role in organ size control and tumor suppression by restricting proliferation and promoting apoptosis. Plays a key role in tissue tension and 3D tissue shape by regulating cortical actomyosin network formation. This Xenopus laevis (African clawed frog) protein is Transcriptional coactivator YAP1-B.